The chain runs to 206 residues: Protein FAM228A (206 aa).

The protein belongs to the FAM228 family.

The protein is Protein FAM228A (FAM228A) of Homo sapiens (Human).